Reading from the N-terminus, the 1400-residue chain is DNA-directed RNA polymerase subunit beta' (1400 aa).

The Zn(2+) site is built by Cys-71, Cys-73, Cys-86, and Cys-89. Residues Asp-462, Asp-464, and Asp-466 each contribute to the Mg(2+) site. Zn(2+) contacts are provided by Cys-811, Cys-885, Cys-892, and Cys-895.

The protein belongs to the RNA polymerase beta' chain family. As to quaternary structure, the RNAP catalytic core consists of 2 alpha, 1 beta, 1 beta' and 1 omega subunit. When a sigma factor is associated with the core the holoenzyme is formed, which can initiate transcription. It depends on Mg(2+) as a cofactor. The cofactor is Zn(2+).

The enzyme catalyses RNA(n) + a ribonucleoside 5'-triphosphate = RNA(n+1) + diphosphate. DNA-dependent RNA polymerase catalyzes the transcription of DNA into RNA using the four ribonucleoside triphosphates as substrates. The chain is DNA-directed RNA polymerase subunit beta' from Brucella ovis (strain ATCC 25840 / 63/290 / NCTC 10512).